The following is a 220-amino-acid chain: NAD(P)H-hydrate epimerase (220 aa).

Positions 6 to 203 constitute a YjeF N-terminal domain; it reads ARHLTTLATG…SFDLPEALFH (198 aa). 53 to 57 is a binding site for (6S)-NADPHX; that stretch reads HNGGV. Asparagine 54 and aspartate 116 together coordinate K(+). (6S)-NADPHX-binding positions include 120-126 and aspartate 149; that span reads GMRLEGP. Threonine 152 lines the K(+) pocket.

The protein belongs to the NnrE/AIBP family. K(+) is required as a cofactor.

The catalysed reaction is (6R)-NADHX = (6S)-NADHX. The enzyme catalyses (6R)-NADPHX = (6S)-NADPHX. Functionally, catalyzes the epimerization of the S- and R-forms of NAD(P)HX, a damaged form of NAD(P)H that is a result of enzymatic or heat-dependent hydration. This is a prerequisite for the S-specific NAD(P)H-hydrate dehydratase to allow the repair of both epimers of NAD(P)HX. The sequence is that of NAD(P)H-hydrate epimerase from Truepera radiovictrix (strain DSM 17093 / CIP 108686 / LMG 22925 / RQ-24).